The primary structure comprises 558 residues: SPATS2-like protein (558 aa).

A2 carries the post-translational modification N-acetylalanine. The segment covering 63-79 has biased composition (basic residues); sequence GKKKNNKRKRSKSKQHQ. Disordered stretches follow at residues 63-148 and 161-202; these read GKKK…RGIT and DGNP…SNAP. Composition is skewed to basic and acidic residues over residues 80–92 and 110–142; these read GNKD…ERPE and GCEK…EPPR. S120 is subject to Phosphoserine. A coiled-coil region spans residues 279 to 344; it reads KEEAMDILTA…ARFSCDIEQL (66 aa). The disordered stretch occupies residues 383–514; it reads KQGNFSRKSS…SEKARRRQHA (132 aa). Over residues 416–433 the composition is skewed to polar residues; the sequence is DACQQTMPTNKQQNGPSN. Position 455 is a phosphoserine (S455). Basic residues predominate over residues 469-485; that stretch reads HEHRRQPHNGFRPKNKG.

Belongs to the SPATS2 family.

The protein resides in the cytoplasm. The protein localises to the nucleus. Its subcellular location is the nucleolus. The protein is SPATS2-like protein (Spats2l) of Rattus norvegicus (Rat).